Here is an 891-residue protein sequence, read N- to C-terminus: Fanconi-associated nuclease 1 homolog (891 aa).

Mn(2+) is bound by residues glutamate 712, aspartate 833, glutamate 852, and valine 853. Residues 770–884 enclose the VRR-NUC domain; sequence GMAEEILIIS…GFNVEICKVR (115 aa).

This sequence belongs to the FAN1 family. Mn(2+) is required as a cofactor. It depends on Mg(2+) as a cofactor.

It localises to the nucleus. The enzyme catalyses Hydrolytically removes 5'-nucleotides successively from the 3'-hydroxy termini of 3'-hydroxy-terminated oligonucleotides.. Nuclease required for the repair of DNA interstrand cross-links (ICLs). Acts as a 5'-3' exonuclease that anchors at a cut end of DNA and cleaves DNA successively at every third nucleotide, allowing to excise an ICL from one strand through flanking incisions. May act upstream of the helicase RECQL4A and the ATPase RAD5A, which is involved in error-free post-replicative repair. Functions independently of MUS81 pathway, but in a similar pathway with RECQ4A, RAD5A and MFH1 in ICL repair. This chain is Fanconi-associated nuclease 1 homolog, found in Arabidopsis thaliana (Mouse-ear cress).